A 257-amino-acid chain; its full sequence is UPF0246 protein CLH_2088 (257 aa).

It belongs to the UPF0246 family.

In Clostridium botulinum (strain Alaska E43 / Type E3), this protein is UPF0246 protein CLH_2088.